Reading from the N-terminus, the 329-residue chain is Gamma-resorcylate decarboxylase (329 aa).

Zn(2+) is bound by residues Glu-8, His-10, His-167, and Asp-290. Residue Asp-290 is part of the active site.

Belongs to the metallo-dependent hydrolases superfamily. ACMSD family. Zn(2+) serves as cofactor.

It catalyses the reaction 2,6-dihydroxybenzoate + H(+) = resorcinol + CO2. The protein operates within aromatic compound metabolism. In terms of biological role, involved in the gamma-resorcylate (2,6-dihydroxybenzoate) catabolism. Catalyzes the reversible decarboxylation of gamma-resorcylate to resorcinol. This Rhodococcus jostii (strain RHA1) protein is Gamma-resorcylate decarboxylase.